The sequence spans 407 residues: Inhibin beta B chain (407 aa).

Residues 1–28 (MDGLPGRALGAACLLLLAAGWLGPEAWG) form the signal peptide. The segment at 27–60 (WGSPTPPPSPAAPPPPPPPGALGGSQDTCTSCGG) is disordered. The propeptide occupies 29 to 292 (SPTPPPSPAA…VDSRHRIRKR (264 aa)). Over residues 30–46 (PTPPPSPAAPPPPPPPG) the composition is skewed to pro residues. Asparagine 93 is a glycosylation site (N-linked (GlcNAc...) asparagine). 4 disulfides stabilise this stretch: cysteine 296-cysteine 304, cysteine 303-cysteine 372, cysteine 332-cysteine 404, and cysteine 336-cysteine 406.

The protein belongs to the TGF-beta family. In terms of assembly, dimeric, linked by one or more disulfide bonds. Inhibin B is a dimer of alpha and beta-B. Activin B is a homodimer of beta-B. Activin AB is a dimer of beta-A and beta-B. Interacts with FST and FSTL3.

It localises to the secreted. Inhibins and activins inhibit and activate, respectively, the secretion of follitropin by the pituitary gland. Inhibins/activins are involved in regulating a number of diverse functions such as hypothalamic and pituitary hormone secretion, gonadal hormone secretion, germ cell development and maturation, erythroid differentiation, insulin secretion, nerve cell survival, embryonic axial development or bone growth, depending on their subunit composition. Inhibins appear to oppose the functions of activins. In terms of biological role, activin B is a dimer of alpha and beta-B that plays a role in several essential biological processes including embryonic development, stem cell maintenance and differentiation, haematopoiesis, cell proliferation and wound healing. Signals through type I receptor ACVR1C, abundantly expressed in pancreatic beta cells, and type II receptors like ACVR2A. Upon ligand binding, these receptors phosphorylate intracellular signaling mediators SMAD2 and SMAD3, which form a complex with SMAD4, translocate to the nucleus, and regulate gene expression. Plays a crucial role in the induction of hepcidin by inflammation through activation of ACVR1C and subsequent phosphorylation of SMAD1/5/8. Regulates adipocyte lipid metabolism by decreasing non-esterified fatty acids and glycerol release and increases intracellular triglyceride content. Stimulates wound healing by promoting cell migration and hair follicle regeneration through the JNK and ERK signaling pathways downstream of RHOA. Functionally, inhibin B is a dimer of alpha and beta-B that plays a crucial role in the regulation of the reproductive system by inhibiting the secretion of follicle-stimulating hormone (FSH) from the anterior pituitary gland. Thereby, maintains reproductive homeostasis in both males and females. Acts as a more potent suppressor of FSH release than inhibin A. Functions as competitive receptor antagonist binding activin type II receptors with high affinity in the presence of the TGF-beta type III coreceptor/TGFBR3L. This Sus scrofa (Pig) protein is Inhibin beta B chain (INHBB).